The following is a 278-amino-acid chain: Ribosomal RNA small subunit methyltransferase A (278 aa).

Residues N27, L29, G54, E75, D101, and N122 each coordinate S-adenosyl-L-methionine.

This sequence belongs to the class I-like SAM-binding methyltransferase superfamily. rRNA adenine N(6)-methyltransferase family. RsmA subfamily.

The protein localises to the cytoplasm. The enzyme catalyses adenosine(1518)/adenosine(1519) in 16S rRNA + 4 S-adenosyl-L-methionine = N(6)-dimethyladenosine(1518)/N(6)-dimethyladenosine(1519) in 16S rRNA + 4 S-adenosyl-L-homocysteine + 4 H(+). Specifically dimethylates two adjacent adenosines (A1518 and A1519) in the loop of a conserved hairpin near the 3'-end of 16S rRNA in the 30S particle. May play a critical role in biogenesis of 30S subunits. The protein is Ribosomal RNA small subunit methyltransferase A of Brucella anthropi (strain ATCC 49188 / DSM 6882 / CCUG 24695 / JCM 21032 / LMG 3331 / NBRC 15819 / NCTC 12168 / Alc 37) (Ochrobactrum anthropi).